The primary structure comprises 58 residues: Large ribosomal subunit protein uL30 (58 aa).

The protein belongs to the universal ribosomal protein uL30 family. As to quaternary structure, part of the 50S ribosomal subunit.

This Buchnera aphidicola subsp. Baizongia pistaciae (strain Bp) protein is Large ribosomal subunit protein uL30.